A 239-amino-acid polypeptide reads, in one-letter code: Probable transcriptional regulatory protein Sca_0317 (239 aa).

Belongs to the TACO1 family. YeeN subfamily.

The protein resides in the cytoplasm. The protein is Probable transcriptional regulatory protein Sca_0317 of Staphylococcus carnosus (strain TM300).